A 527-amino-acid polypeptide reads, in one-letter code: Peptide chain release factor 3 (527 aa).

The region spanning A9 to L277 is the tr-type G domain. GTP-binding positions include S18 to T25, D86 to H90, and N140 to D143.

This sequence belongs to the TRAFAC class translation factor GTPase superfamily. Classic translation factor GTPase family. PrfC subfamily.

Its subcellular location is the cytoplasm. Its function is as follows. Increases the formation of ribosomal termination complexes and stimulates activities of RF-1 and RF-2. It binds guanine nucleotides and has strong preference for UGA stop codons. It may interact directly with the ribosome. The stimulation of RF-1 and RF-2 is significantly reduced by GTP and GDP, but not by GMP. The protein is Peptide chain release factor 3 of Pseudomonas fluorescens (strain SBW25).